The sequence spans 419 residues: Satellite RNA 48 kDa protein (419 aa).

Basic residues predominate over residues 1 to 27 (MQKTMTRHLSRNRKPHEKVSHVPRRGP). The disordered stretch occupies residues 1–66 (MQKTMTRHLS…SLGRKPYNPG (66 aa)).

Belongs to the nepovirus satellite RNA 48 kDa protein family.

The polypeptide is Satellite RNA 48 kDa protein (Allium porrum (Leek)).